We begin with the raw amino-acid sequence, 47 residues long: uncharacterized protein (47 aa).

An ATP-cone domain is found at 2–47; sequence LRVRKRDGRLEEFSRAKIVRTCLRAGASKKIAEKVAEELKRGYTMG.

This is an uncharacterized protein from Archaeoglobus fulgidus (strain ATCC 49558 / DSM 4304 / JCM 9628 / NBRC 100126 / VC-16).